A 122-amino-acid chain; its full sequence is Large ribosomal subunit protein uL18 (122 aa).

The protein belongs to the universal ribosomal protein uL18 family. In terms of assembly, part of the 50S ribosomal subunit; part of the 5S rRNA/L5/L18/L25 subcomplex. Contacts the 5S and 23S rRNAs.

Functionally, this is one of the proteins that bind and probably mediate the attachment of the 5S RNA into the large ribosomal subunit, where it forms part of the central protuberance. The sequence is that of Large ribosomal subunit protein uL18 from Acetivibrio thermocellus (strain ATCC 27405 / DSM 1237 / JCM 9322 / NBRC 103400 / NCIMB 10682 / NRRL B-4536 / VPI 7372) (Clostridium thermocellum).